The sequence spans 114 residues: T cell receptor beta variable 6-6 (114 aa).

A signal peptide spans 1-21; that stretch reads MSISLLCCAAFPLLWAGPVNA. In terms of domain architecture, Ig-like spans 22–114; that stretch reads GVTQTPKFRI…TSVYFCASSY (93 aa). Cysteines 42 and 110 form a disulfide. Asn-84 carries an N-linked (GlcNAc...) asparagine glycan.

As to quaternary structure, alpha-beta TR is a heterodimer composed of an alpha and beta chain; disulfide-linked. The alpha-beta TR is associated with the transmembrane signaling CD3 coreceptor proteins to form the TR-CD3 (TcR or TCR). The assembly of alpha-beta TR heterodimers with CD3 occurs in the endoplasmic reticulum where a single alpha-beta TR heterodimer associates with one CD3D-CD3E heterodimer, one CD3G-CD3E heterodimer and one CD247 homodimer forming a stable octameric structure. CD3D-CD3E and CD3G-CD3E heterodimers preferentially associate with TR alpha and TR beta chains, respectively. The association of the CD247 homodimer is the last step of TcR assembly in the endoplasmic reticulum and is required for transport to the cell surface.

The protein localises to the cell membrane. Functionally, v region of the variable domain of T cell receptor (TR) beta chain that participates in the antigen recognition. Alpha-beta T cell receptors are antigen specific receptors which are essential to the immune response and are present on the cell surface of T lymphocytes. Recognize peptide-major histocompatibility (MH) (pMH) complexes that are displayed by antigen presenting cells (APC), a prerequisite for efficient T cell adaptive immunity against pathogens. Binding of alpha-beta TR to pMH complex initiates TR-CD3 clustering on the cell surface and intracellular activation of LCK that phosphorylates the ITAM motifs of CD3G, CD3D, CD3E and CD247 enabling the recruitment of ZAP70. In turn ZAP70 phosphorylates LAT, which recruits numerous signaling molecules to form the LAT signalosome. The LAT signalosome propagates signal branching to three major signaling pathways, the calcium, the mitogen-activated protein kinase (MAPK) kinase and the nuclear factor NF-kappa-B (NF-kB) pathways, leading to the mobilization of transcription factors that are critical for gene expression and essential for T cell growth and differentiation. The T cell repertoire is generated in the thymus, by V-(D)-J rearrangement. This repertoire is then shaped by intrathymic selection events to generate a peripheral T cell pool of self-MH restricted, non-autoaggressive T cells. Post-thymic interaction of alpha-beta TR with the pMH complexes shapes TR structural and functional avidity. This Homo sapiens (Human) protein is T cell receptor beta variable 6-6.